The following is a 496-amino-acid chain: Coiled-coil domain-containing protein 77 (496 aa).

The interval 1 to 42 is disordered; sequence MDFSPPHGLRGGRSPSLQDTTISSSHTQKNGGDSTPLPPINE. Residues 15–33 show a composition bias toward polar residues; sequence PSLQDTTISSSHTQKNGGD. Residues 51–113 are a coiled coil; sequence RELLEYYRKK…KALSDMQVYL (63 aa). Positions 170 to 208 are disordered; that stretch reads QRTVQSGDPFDRKVQRSGRAGVKQVPLKAPGKQDRTKAA. A coiled-coil region spans residues 214–495; that stretch reads QILLLQVEAL…IYGLENELRI (282 aa).

This chain is Coiled-coil domain-containing protein 77 (ccdc77), found in Xenopus laevis (African clawed frog).